Here is a 472-residue protein sequence, read N- to C-terminus: Proline--tRNA ligase (472 aa).

It belongs to the class-II aminoacyl-tRNA synthetase family. ProS type 3 subfamily. In terms of assembly, homodimer.

The protein localises to the cytoplasm. It catalyses the reaction tRNA(Pro) + L-proline + ATP = L-prolyl-tRNA(Pro) + AMP + diphosphate. Functionally, catalyzes the attachment of proline to tRNA(Pro) in a two-step reaction: proline is first activated by ATP to form Pro-AMP and then transferred to the acceptor end of tRNA(Pro). This chain is Proline--tRNA ligase, found in Ureaplasma parvum serovar 3 (strain ATCC 27815 / 27 / NCTC 11736).